A 466-amino-acid polypeptide reads, in one-letter code: Oxysterol-binding protein 4 (466 aa).

A compositionally biased stretch (polar residues) spans 1–12 (MEIGTSSTTNNI). The segment at 1 to 67 (MEIGTSSTTN…STSPPSPPIE (67 aa)) is disordered. Positions 24–45 (NNNNHNNNSSNNSSNNNSISSS) are enriched in low complexity. Positions 46-60 (PTDSSQLMNGEQSTS) are enriched in polar residues.

It belongs to the OSBP family.

The polypeptide is Oxysterol-binding protein 4 (osbD) (Dictyostelium discoideum (Social amoeba)).